Consider the following 56-residue polypeptide: UPF0391 membrane protein HCH_04387 (56 aa).

The next 2 helical transmembrane spans lie at 6-26 (IVFF…IAAA) and 30-50 (IAQI…IAGG).

It belongs to the UPF0391 family.

Its subcellular location is the cell membrane. The polypeptide is UPF0391 membrane protein HCH_04387 (Hahella chejuensis (strain KCTC 2396)).